Reading from the N-terminus, the 314-residue chain is Methionyl-tRNA formyltransferase (314 aa).

Position 111–114 (111–114 (SLLP)) interacts with (6S)-5,6,7,8-tetrahydrofolate.

It belongs to the Fmt family.

It catalyses the reaction L-methionyl-tRNA(fMet) + (6R)-10-formyltetrahydrofolate = N-formyl-L-methionyl-tRNA(fMet) + (6S)-5,6,7,8-tetrahydrofolate + H(+). Functionally, attaches a formyl group to the free amino group of methionyl-tRNA(fMet). The formyl group appears to play a dual role in the initiator identity of N-formylmethionyl-tRNA by promoting its recognition by IF2 and preventing the misappropriation of this tRNA by the elongation apparatus. The protein is Methionyl-tRNA formyltransferase of Coxiella burnetii (strain CbuK_Q154) (Coxiella burnetii (strain Q154)).